Reading from the N-terminus, the 252-residue chain is 3-deoxy-manno-octulosonate cytidylyltransferase 2 (252 aa).

Belongs to the KdsB family.

It localises to the cytoplasm. The catalysed reaction is 3-deoxy-alpha-D-manno-oct-2-ulosonate + CTP = CMP-3-deoxy-beta-D-manno-octulosonate + diphosphate. It participates in nucleotide-sugar biosynthesis; CMP-3-deoxy-D-manno-octulosonate biosynthesis; CMP-3-deoxy-D-manno-octulosonate from 3-deoxy-D-manno-octulosonate and CTP: step 1/1. It functions in the pathway bacterial outer membrane biogenesis; lipopolysaccharide biosynthesis. Functionally, activates KDO (a required 8-carbon sugar) for incorporation into bacterial lipopolysaccharide in Gram-negative bacteria. This Actinobacillus pleuropneumoniae serotype 5b (strain L20) protein is 3-deoxy-manno-octulosonate cytidylyltransferase 2.